The chain runs to 492 residues: Aspartyl/glutamyl-tRNA(Asn/Gln) amidotransferase subunit B (492 aa).

The protein belongs to the GatB/GatE family. GatB subfamily. In terms of assembly, heterotrimer of A, B and C subunits.

The catalysed reaction is L-glutamyl-tRNA(Gln) + L-glutamine + ATP + H2O = L-glutaminyl-tRNA(Gln) + L-glutamate + ADP + phosphate + H(+). It carries out the reaction L-aspartyl-tRNA(Asn) + L-glutamine + ATP + H2O = L-asparaginyl-tRNA(Asn) + L-glutamate + ADP + phosphate + 2 H(+). Its function is as follows. Allows the formation of correctly charged Asn-tRNA(Asn) or Gln-tRNA(Gln) through the transamidation of misacylated Asp-tRNA(Asn) or Glu-tRNA(Gln) in organisms which lack either or both of asparaginyl-tRNA or glutaminyl-tRNA synthetases. The reaction takes place in the presence of glutamine and ATP through an activated phospho-Asp-tRNA(Asn) or phospho-Glu-tRNA(Gln). The sequence is that of Aspartyl/glutamyl-tRNA(Asn/Gln) amidotransferase subunit B from Dehalococcoides mccartyi (strain ATCC BAA-2266 / KCTC 15142 / 195) (Dehalococcoides ethenogenes (strain 195)).